We begin with the raw amino-acid sequence, 358 residues long: tRNA(Ile)-lysidine synthase (358 aa).

35–40 (SGGPDS) is an ATP binding site.

The protein belongs to the tRNA(Ile)-lysidine synthase family.

It is found in the cytoplasm. The enzyme catalyses cytidine(34) in tRNA(Ile2) + L-lysine + ATP = lysidine(34) in tRNA(Ile2) + AMP + diphosphate + H(+). Its function is as follows. Ligates lysine onto the cytidine present at position 34 of the AUA codon-specific tRNA(Ile) that contains the anticodon CAU, in an ATP-dependent manner. Cytidine is converted to lysidine, thus changing the amino acid specificity of the tRNA from methionine to isoleucine. The chain is tRNA(Ile)-lysidine synthase from Bradyrhizobium sp. (strain BTAi1 / ATCC BAA-1182).